Here is a 406-residue protein sequence, read N- to C-terminus: Lysophospholipid transporter LplT (406 aa).

The next 11 helical transmembrane spans lie at 16–36 (MVAV…LLFA), 53–73 (ILQM…GQIA), 91–111 (AGAL…LVGV), 139–159 (MMEA…GILA), 164–184 (MAAL…NLFI), 227–247 (LFWG…PVAL), 253–273 (ATPT…AGAA), 285–305 (CLPA…QNSM), 310–330 (LLLI…NALL), 349–369 (LGEN…VKLG), and 372–392 (VVAV…LLWG).

This sequence belongs to the major facilitator superfamily. LplT (TC 2.A.1.42) family.

It is found in the cell inner membrane. Its function is as follows. Catalyzes the facilitated diffusion of 2-acyl-glycero-3-phosphoethanolamine (2-acyl-GPE) into the cell. This Yersinia pestis bv. Antiqua (strain Antiqua) protein is Lysophospholipid transporter LplT.